Consider the following 159-residue polypeptide: Protein-export protein SecB (159 aa).

It belongs to the SecB family. Homotetramer, a dimer of dimers. One homotetramer interacts with 1 SecA dimer.

The protein localises to the cytoplasm. Its function is as follows. One of the proteins required for the normal export of preproteins out of the cell cytoplasm. It is a molecular chaperone that binds to a subset of precursor proteins, maintaining them in a translocation-competent state. It also specifically binds to its receptor SecA. This is Protein-export protein SecB from Nitrobacter winogradskyi (strain ATCC 25391 / DSM 10237 / CIP 104748 / NCIMB 11846 / Nb-255).